We begin with the raw amino-acid sequence, 63 residues long: Large ribosomal subunit protein bL33m (63 aa).

It belongs to the bacterial ribosomal protein bL33 family.

Its subcellular location is the mitochondrion. The polypeptide is Large ribosomal subunit protein bL33m (mrpl33) (Dictyostelium discoideum (Social amoeba)).